Reading from the N-terminus, the 127-residue chain is Small ribosomal subunit protein uS8m (127 aa).

This sequence belongs to the universal ribosomal protein uS8 family.

The protein localises to the mitochondrion. This Acanthamoeba castellanii (Amoeba) protein is Small ribosomal subunit protein uS8m (RPS8).